The chain runs to 434 residues: Serine hydroxymethyltransferase (434 aa).

(6S)-5,6,7,8-tetrahydrofolate is bound by residues Leu-133 and 137–139; that span reads GHL. The residue at position 242 (Lys-242) is an N6-(pyridoxal phosphate)lysine. 366–368 contributes to the (6S)-5,6,7,8-tetrahydrofolate binding site; sequence SPF.

Belongs to the SHMT family. As to quaternary structure, homodimer. Pyridoxal 5'-phosphate is required as a cofactor.

It localises to the cytoplasm. It carries out the reaction (6R)-5,10-methylene-5,6,7,8-tetrahydrofolate + glycine + H2O = (6S)-5,6,7,8-tetrahydrofolate + L-serine. The protein operates within one-carbon metabolism; tetrahydrofolate interconversion. It participates in amino-acid biosynthesis; glycine biosynthesis; glycine from L-serine: step 1/1. In terms of biological role, catalyzes the reversible interconversion of serine and glycine with tetrahydrofolate (THF) serving as the one-carbon carrier. This reaction serves as the major source of one-carbon groups required for the biosynthesis of purines, thymidylate, methionine, and other important biomolecules. Also exhibits THF-independent aldolase activity toward beta-hydroxyamino acids, producing glycine and aldehydes, via a retro-aldol mechanism. This Erythrobacter litoralis (strain HTCC2594) protein is Serine hydroxymethyltransferase.